Here is a 387-residue protein sequence, read N- to C-terminus: MRNWLLPEYIEDVLPAEAARVEQLRRSLLDLFKVHGYLYVIPPMMEYMESLTTGIGHDLDIATFKVVDQLTGKLMGIRADITPQTARIDAHMLNNQGVTRLCYAGSVLRTSPDGLARSREPLHVGAELYGHAGVESDIEIQRLMIKALHTVGLDTLYIDVSHVGIFASLLEHAGIGEAQEQELYAALQSKDQAAVRALGRGLNPDTLEALSSLTELSGDISVLEQAAKRLPQTEKIQQALRDLKAVGAGLDDLDVKVCFDLAELRGYHYHSGIVFAAYAQGYAGPLARGGRYDEVGAIFGRARPATGFSLDLRGVVSSLPVAETVGAIFAPAIADDALIFVVESLRAQGQVVIQDLPGQEPYRAELGCDRILVQQNGEWVVVAAPEL.

The protein belongs to the class-II aminoacyl-tRNA synthetase family. HisZ subfamily. Heteromultimer composed of HisG and HisZ subunits.

It localises to the cytoplasm. The protein operates within amino-acid biosynthesis; L-histidine biosynthesis; L-histidine from 5-phospho-alpha-D-ribose 1-diphosphate: step 1/9. Its function is as follows. Required for the first step of histidine biosynthesis. May allow the feedback regulation of ATP phosphoribosyltransferase activity by histidine. The sequence is that of ATP phosphoribosyltransferase regulatory subunit from Methylobacillus flagellatus (strain ATCC 51484 / DSM 6875 / VKM B-1610 / KT).